The sequence spans 185 residues: MIEASKLRAGMTFEAEGKLIRVLEASHHKPGKGNTIMRMKLRDVRTGSTFDTTYRPDEKFEQAIIETVPAQYLYKMDETAYFMNTETYDQYEIPVANVEQELLYILENSDVKIQFYGTEVIGVQVPTTVELTVTETQPSIKGATVTGSGKPATLETGLVVNVPDFIEVGQKLIINTAEGTYVSRA.

Belongs to the elongation factor P family.

The protein localises to the cytoplasm. The protein operates within protein biosynthesis; polypeptide chain elongation. In terms of biological role, involved in peptide bond synthesis. Stimulates efficient translation and peptide-bond synthesis on native or reconstituted 70S ribosomes in vitro. Probably functions indirectly by altering the affinity of the ribosome for aminoacyl-tRNA, thus increasing their reactivity as acceptors for peptidyl transferase. This is Elongation factor P from Streptococcus equi subsp. equi (strain 4047).